A 488-amino-acid polypeptide reads, in one-letter code: Ribulose bisphosphate carboxylase large chain (488 aa).

The substrate site is built by N127 and T177. Residue K179 is the Proton acceptor of the active site. K181 provides a ligand contact to substrate. Residues K205, D207, and E208 each coordinate Mg(2+). Position 205 is an N6-carboxylysine (K205). The active-site Proton acceptor is H297. Residues R298, H330, and S382 each contribute to the substrate site.

It belongs to the RuBisCO large chain family. Type I subfamily. In terms of assembly, heterohexadecamer of 8 large chains and 8 small chains. The cofactor is Mg(2+).

Its subcellular location is the plastid. It is found in the chloroplast. The enzyme catalyses 2 (2R)-3-phosphoglycerate + 2 H(+) = D-ribulose 1,5-bisphosphate + CO2 + H2O. It carries out the reaction D-ribulose 1,5-bisphosphate + O2 = 2-phosphoglycolate + (2R)-3-phosphoglycerate + 2 H(+). Its function is as follows. RuBisCO catalyzes two reactions: the carboxylation of D-ribulose 1,5-bisphosphate, the primary event in carbon dioxide fixation, as well as the oxidative fragmentation of the pentose substrate in the photorespiration process. Both reactions occur simultaneously and in competition at the same active site. This Porphyra umbilicalis (Purple laver) protein is Ribulose bisphosphate carboxylase large chain (rbcL).